Here is a 326-residue protein sequence, read N- to C-terminus: Putative HTH-type transcriptional regulatory protein MmarC5_0898 (326 aa).

Positions 128–183 constitute an HTH cro/C1-type domain; the sequence is LRETREKLKISVGELAEISRVSRKTIYKYEQNEANPSAEVAIKIEEYLDVPLIKGI. Residues 139 to 158 constitute a DNA-binding region (H-T-H motif); it reads VGELAEISRVSRKTIYKYEQ.

The sequence is that of Putative HTH-type transcriptional regulatory protein MmarC5_0898 from Methanococcus maripaludis (strain C5 / ATCC BAA-1333).